The chain runs to 775 residues: Transcription activator of gluconeogenesis HCBG_00867 (775 aa).

Residues 1-70 (MTASTQNGSP…NAKDPLRPRR (70 aa)) form a disordered region. 2 stretches are compositionally biased toward polar residues: residues 21–41 (NQES…QSPA) and 48–60 (TAES…STAA). A DNA-binding region (zn(2)-C6 fungal-type) is located at residues 77 to 105 (CFACQRAHLTCGDERPCQRCIKRGLQDAC). Disordered regions lie at residues 179-248 (TQAK…PFGA), 286-351 (GAGD…NIYN), 556-592 (NLNV…AGGG), and 649-725 (QGKE…SPKQ). Residues 195-217 (MQDTSINPSAFQAPSPTSTPNFD) are compositionally biased toward polar residues. The span at 218–229 (LSSNPPNRNLSS) shows a compositional bias: low complexity. Polar residues-rich tracts occupy residues 230 to 244 (AMTQ…QTQD), 292 to 323 (PSDS…TQSP), 334 to 351 (WNPS…NIYN), and 557 to 576 (LNVN…TPRN). The span at 657–668 (GSDGKGGGGGGD) shows a compositional bias: gly residues. The span at 669-713 (VAATAATTSTSTSNGANSSGHANANRNNTNPKNSSPPSSSSAAAA) shows a compositional bias: low complexity.

This sequence belongs to the ERT1/acuK family.

It is found in the nucleus. Transcription factor which regulates nonfermentable carbon utilization. Activator of gluconeogenetic genes. This is Transcription activator of gluconeogenesis HCBG_00867 from Ajellomyces capsulatus (strain G186AR / H82 / ATCC MYA-2454 / RMSCC 2432) (Darling's disease fungus).